A 423-amino-acid polypeptide reads, in one-letter code: Probable M18 family aminopeptidase 2 (423 aa).

3 residues coordinate Zn(2+): histidine 84, histidine 157, and histidine 397.

Belongs to the peptidase M18 family. The cofactor is Zn(2+).

The chain is Probable M18 family aminopeptidase 2 (apeB) from Borreliella burgdorferi (strain ATCC 35210 / DSM 4680 / CIP 102532 / B31) (Borrelia burgdorferi).